The chain runs to 208 residues: High frequency lysogenization protein HflD homolog (208 aa).

The protein belongs to the HflD family.

The protein resides in the cytoplasm. It is found in the cell inner membrane. This is High frequency lysogenization protein HflD homolog from Pseudomonas entomophila (strain L48).